Consider the following 175-residue polypeptide: Inorganic pyrophosphatase (175 aa).

Residues Lys30, Arg44, and Tyr56 each coordinate substrate. The Mg(2+) site is built by Asp66, Asp71, and Asp103. Tyr142 serves as a coordination point for substrate.

The protein belongs to the PPase family. Homohexamer. Requires Mg(2+) as cofactor.

It localises to the cytoplasm. It carries out the reaction diphosphate + H2O = 2 phosphate + H(+). Its function is as follows. Catalyzes the hydrolysis of inorganic pyrophosphate (PPi) forming two phosphate ions. This Buchnera aphidicola subsp. Baizongia pistaciae (strain Bp) protein is Inorganic pyrophosphatase.